The chain runs to 412 residues: DNA polymerase IV 2 (412 aa).

The UmuC domain maps to 7-192 (IFLVDMQSFY…LPVGSMFGVG (186 aa)). Mg(2+)-binding residues include Asp-11 and Asp-107. The active site involves Glu-108.

It belongs to the DNA polymerase type-Y family. Monomer. Requires Mg(2+) as cofactor.

The protein resides in the cytoplasm. It catalyses the reaction DNA(n) + a 2'-deoxyribonucleoside 5'-triphosphate = DNA(n+1) + diphosphate. Functionally, poorly processive, error-prone DNA polymerase involved in untargeted mutagenesis. Copies undamaged DNA at stalled replication forks, which arise in vivo from mismatched or misaligned primer ends. These misaligned primers can be extended by PolIV. Exhibits no 3'-5' exonuclease (proofreading) activity. May be involved in translesion synthesis (TSL), in conjunction with the beta clamp from PolIII. This is DNA polymerase IV 2 (dinB2) from Bacillus subtilis (strain 168).